We begin with the raw amino-acid sequence, 381 residues long: Probable 26S proteasome regulatory subunit rpn9 (381 aa).

Positions 177 to 343 (QYYRHCLLYL…QIVTISSVQS (167 aa)) constitute a PCI domain.

It belongs to the proteasome subunit S11 family.

Functionally, acts as a regulatory subunit of the 26S proteasome which is involved in the ATP-dependent degradation of ubiquitinated proteins. The protein is Probable 26S proteasome regulatory subunit rpn9 (rpn9) of Schizosaccharomyces pombe (strain 972 / ATCC 24843) (Fission yeast).